A 466-amino-acid chain; its full sequence is Chromosomal replication initiator protein DnaA (466 aa).

A domain I, interacts with DnaA modulators region spans residues 1 to 86 (MSLSLWQQCL…EVGTKPVTQT (86 aa)). The interval 86–129 (TLKTPVHNVVAPTQTTTAQPQRVAPAARSGWDNVPAPAEPTYRS) is domain II. The segment at 130–346 (NVNVKHTFDN…GALNRVIANA (217 aa)) is domain III, AAA+ region. The ATP site is built by Gly-174, Gly-176, Lys-177, and Thr-178. The interval 347 to 466 (NFTGRAITID…FSNLIRTLSS (120 aa)) is domain IV, binds dsDNA.

The protein belongs to the DnaA family. As to quaternary structure, oligomerizes as a right-handed, spiral filament on DNA at oriC.

Its subcellular location is the cytoplasm. Functionally, plays an essential role in the initiation and regulation of chromosomal replication. ATP-DnaA binds to the origin of replication (oriC) to initiate formation of the DNA replication initiation complex once per cell cycle. Binds the DnaA box (a 9 base pair repeat at the origin) and separates the double-stranded (ds)DNA. Forms a right-handed helical filament on oriC DNA; dsDNA binds to the exterior of the filament while single-stranded (ss)DNA is stabiized in the filament's interior. The ATP-DnaA-oriC complex binds and stabilizes one strand of the AT-rich DNA unwinding element (DUE), permitting loading of DNA polymerase. After initiation quickly degrades to an ADP-DnaA complex that is not apt for DNA replication. Binds acidic phospholipids. The protein is Chromosomal replication initiator protein DnaA of Salmonella gallinarum (strain 287/91 / NCTC 13346).